We begin with the raw amino-acid sequence, 321 residues long: Lipoyl synthase (321 aa).

Residues C68, C73, C79, C94, C98, C101, and S308 each contribute to the [4Fe-4S] cluster site. One can recognise a Radical SAM core domain in the interval 80–297 (FNHGTATFMI…KALADELGFT (218 aa)).

Belongs to the radical SAM superfamily. Lipoyl synthase family. [4Fe-4S] cluster is required as a cofactor.

The protein resides in the cytoplasm. It carries out the reaction [[Fe-S] cluster scaffold protein carrying a second [4Fe-4S](2+) cluster] + N(6)-octanoyl-L-lysyl-[protein] + 2 oxidized [2Fe-2S]-[ferredoxin] + 2 S-adenosyl-L-methionine + 4 H(+) = [[Fe-S] cluster scaffold protein] + N(6)-[(R)-dihydrolipoyl]-L-lysyl-[protein] + 4 Fe(3+) + 2 hydrogen sulfide + 2 5'-deoxyadenosine + 2 L-methionine + 2 reduced [2Fe-2S]-[ferredoxin]. It functions in the pathway protein modification; protein lipoylation via endogenous pathway; protein N(6)-(lipoyl)lysine from octanoyl-[acyl-carrier-protein]: step 2/2. In terms of biological role, catalyzes the radical-mediated insertion of two sulfur atoms into the C-6 and C-8 positions of the octanoyl moiety bound to the lipoyl domains of lipoate-dependent enzymes, thereby converting the octanoylated domains into lipoylated derivatives. The chain is Lipoyl synthase from Shewanella oneidensis (strain ATCC 700550 / JCM 31522 / CIP 106686 / LMG 19005 / NCIMB 14063 / MR-1).